Reading from the N-terminus, the 371-residue chain is 4-hydroxy-3-methylbut-2-en-1-yl diphosphate synthase (flavodoxin) (371 aa).

[4Fe-4S] cluster is bound by residues Cys270, Cys273, Cys305, and Glu312.

This sequence belongs to the IspG family. The cofactor is [4Fe-4S] cluster.

It catalyses the reaction (2E)-4-hydroxy-3-methylbut-2-enyl diphosphate + oxidized [flavodoxin] + H2O + 2 H(+) = 2-C-methyl-D-erythritol 2,4-cyclic diphosphate + reduced [flavodoxin]. It functions in the pathway isoprenoid biosynthesis; isopentenyl diphosphate biosynthesis via DXP pathway; isopentenyl diphosphate from 1-deoxy-D-xylulose 5-phosphate: step 5/6. Functionally, converts 2C-methyl-D-erythritol 2,4-cyclodiphosphate (ME-2,4cPP) into 1-hydroxy-2-methyl-2-(E)-butenyl 4-diphosphate. The sequence is that of 4-hydroxy-3-methylbut-2-en-1-yl diphosphate synthase (flavodoxin) from Shewanella sediminis (strain HAW-EB3).